A 658-amino-acid polypeptide reads, in one-letter code: Protein teflon (658 aa).

A C2H2-type 1 zinc finger spans residues 33–56; it reads LYCHFCRDLFTQLPEFLRHLQGAH. Disordered stretches follow at residues 78–127 and 151–175; these read EQDD…SEQK and HINNESKPENGGFNGPCKKASSESN. Positions 100–111 are enriched in basic and acidic residues; the sequence is IPAKSEDSRAID. A compositionally biased stretch (polar residues) spans 118 to 127; sequence DNSPVKSEQK. The C2H2-type 2; degenerate zinc finger occupies 608 to 630; sequence YFCKCCDDIFTLNEDYTRHLVSQ. The C2H2-type 3 zinc-finger motif lies at 634-657; sequence YQCTKCIKAFKYRGHFEKHLQNVH.

This sequence belongs to the Teflon family.

Its subcellular location is the nucleus. The protein localises to the chromosome. In terms of biological role, specifically required in males for proper segregation of autosomal bivalents at meiosis I. Expression is required in the male germ line prior to spermatocyte stage S4. May have a role as a bridging molecule maintaining adhesion to hold autosome bivalents together via heterochromatic connections. This chain is Protein teflon, found in Drosophila erecta (Fruit fly).